The sequence spans 172 residues: Protein GrpE (172 aa).

Residues 1-23 (MNQDHPECDSEELTQNSPETDPL) are disordered.

It belongs to the GrpE family. As to quaternary structure, homodimer.

It localises to the cytoplasm. Its function is as follows. Participates actively in the response to hyperosmotic and heat shock by preventing the aggregation of stress-denatured proteins, in association with DnaK and GrpE. It is the nucleotide exchange factor for DnaK and may function as a thermosensor. Unfolded proteins bind initially to DnaJ; upon interaction with the DnaJ-bound protein, DnaK hydrolyzes its bound ATP, resulting in the formation of a stable complex. GrpE releases ADP from DnaK; ATP binding to DnaK triggers the release of the substrate protein, thus completing the reaction cycle. Several rounds of ATP-dependent interactions between DnaJ, DnaK and GrpE are required for fully efficient folding. This Xylella fastidiosa (strain M23) protein is Protein GrpE.